A 121-amino-acid chain; its full sequence is Large ribosomal subunit protein eL18 (121 aa).

It belongs to the eukaryotic ribosomal protein eL18 family.

This is Large ribosomal subunit protein eL18 from Methanospirillum hungatei JF-1 (strain ATCC 27890 / DSM 864 / NBRC 100397 / JF-1).